The following is a 200-amino-acid chain: Dephospho-CoA kinase (200 aa).

The DPCK domain occupies 3 to 200 (RIGLTGGIGS…LIAEILSRVN (198 aa)). 11 to 16 (GSGKST) contributes to the ATP binding site.

The protein belongs to the CoaE family.

It is found in the cytoplasm. The catalysed reaction is 3'-dephospho-CoA + ATP = ADP + CoA + H(+). The protein operates within cofactor biosynthesis; coenzyme A biosynthesis; CoA from (R)-pantothenate: step 5/5. Catalyzes the phosphorylation of the 3'-hydroxyl group of dephosphocoenzyme A to form coenzyme A. In Corynebacterium glutamicum (strain ATCC 13032 / DSM 20300 / JCM 1318 / BCRC 11384 / CCUG 27702 / LMG 3730 / NBRC 12168 / NCIMB 10025 / NRRL B-2784 / 534), this protein is Dephospho-CoA kinase.